Here is a 302-residue protein sequence, read N- to C-terminus: tRNA-cytidine(32) 2-sulfurtransferase (302 aa).

The PP-loop motif motif lies at 44-49 (SGGKDS). 3 residues coordinate [4Fe-4S] cluster: Cys119, Cys122, and Cys210.

This sequence belongs to the TtcA family. As to quaternary structure, homodimer. Mg(2+) is required as a cofactor. [4Fe-4S] cluster serves as cofactor.

Its subcellular location is the cytoplasm. The enzyme catalyses cytidine(32) in tRNA + S-sulfanyl-L-cysteinyl-[cysteine desulfurase] + AH2 + ATP = 2-thiocytidine(32) in tRNA + L-cysteinyl-[cysteine desulfurase] + A + AMP + diphosphate + H(+). It functions in the pathway tRNA modification. Catalyzes the ATP-dependent 2-thiolation of cytidine in position 32 of tRNA, to form 2-thiocytidine (s(2)C32). The sulfur atoms are provided by the cysteine/cysteine desulfurase (IscS) system. This is tRNA-cytidine(32) 2-sulfurtransferase from Tolumonas auensis (strain DSM 9187 / NBRC 110442 / TA 4).